The chain runs to 125 residues: MLTKREKKELGIGKDQGKAILRYARISPRKVRIVLDLIKGKDIDEAYAILRYTPKAASSILFKLLKSAEANATNNNGLNRDNLYVAEAYADQGPTLKRILPRARGSADRIRKRTSHITLVVKERS.

It belongs to the universal ribosomal protein uL22 family. As to quaternary structure, part of the 50S ribosomal subunit.

Its function is as follows. This protein binds specifically to 23S rRNA; its binding is stimulated by other ribosomal proteins, e.g. L4, L17, and L20. It is important during the early stages of 50S assembly. It makes multiple contacts with different domains of the 23S rRNA in the assembled 50S subunit and ribosome. Functionally, the globular domain of the protein is located near the polypeptide exit tunnel on the outside of the subunit, while an extended beta-hairpin is found that lines the wall of the exit tunnel in the center of the 70S ribosome. This Acetivibrio thermocellus (strain ATCC 27405 / DSM 1237 / JCM 9322 / NBRC 103400 / NCIMB 10682 / NRRL B-4536 / VPI 7372) (Clostridium thermocellum) protein is Large ribosomal subunit protein uL22.